A 675-amino-acid polypeptide reads, in one-letter code: Methionine--tRNA ligase (675 aa).

The 'HIGH' region signature appears at 15-25 (PYANGSIHLGH). Zn(2+) contacts are provided by Cys146, Cys149, Cys159, and Cys162. The 'KMSKS' region signature appears at 332 to 336 (KMSKS). An ATP-binding site is contributed by Lys335. The tRNA-binding domain occupies 573–675 (DFAKVDMRIA…SGAQPGMQVK (103 aa)).

Belongs to the class-I aminoacyl-tRNA synthetase family. MetG type 1 subfamily. As to quaternary structure, homodimer. It depends on Zn(2+) as a cofactor.

It is found in the cytoplasm. It carries out the reaction tRNA(Met) + L-methionine + ATP = L-methionyl-tRNA(Met) + AMP + diphosphate. Is required not only for elongation of protein synthesis but also for the initiation of all mRNA translation through initiator tRNA(fMet) aminoacylation. The polypeptide is Methionine--tRNA ligase (Yersinia pseudotuberculosis serotype IB (strain PB1/+)).